Consider the following 100-residue polypeptide: Serine protease inhibitor 1 protein (100 aa).

A signal peptide spans 1 to 20; sequence MKHLLIVSLVFVTIIWKIEC. 5 disulfide bridges follow: C42–C74, C51–C69, C54–C65, C58–C93, and C76–C90. Positions 42–93 constitute a TIL domain; that stretch reads CGLNEVWMVCSSCEEECGKTPQPCPRICQPARCQCPAHKGYRRDGQGNCIFC.

It is found in the secreted. The polypeptide is Serine protease inhibitor 1 protein (Caenorhabditis elegans).